The sequence spans 1837 residues: Nucleoporin nup211 (1837 aa).

3 coiled-coil regions span residues 59-378 (EVNY…YDEI), 415-519 (YKQK…ELDL), and 559-625 (VFRN…QLRY). The residue at position 650 (Thr650) is a Phosphothreonine. Coiled coils occupy residues 661–1163 (EQTS…NKLL), 1222–1637 (LDNR…ENTH), and 1675–1712 (KAKI…PEKT). Residues 1464–1521 (KDSNHQLQESASSDAEQITKEQFEQLKSEKERTEKELADSKNELEHLQSEAVDADGKT) are disordered. The span at 1468–1479 (HQLQESASSDAE) shows a compositional bias: polar residues. Over residues 1480–1521 (QITKEQFEQLKSEKERTEKELADSKNELEHLQSEAVDADGKT) the composition is skewed to basic and acidic residues. Ser1558 bears the Phosphoserine mark. Thr1560 carries the phosphothreonine modification. Ser1563 is subject to Phosphoserine. Disordered regions lie at residues 1602–1642 (EKEK…NIDD) and 1700–1837 (ENLN…KKAK). Positions 1617-1628 (KSQRIKELEEQA) are enriched in basic and acidic residues. Composition is skewed to polar residues over residues 1700–1730 (ENLN…SKPT), 1753–1763 (KSLSARLQGTG), 1795–1814 (IATS…TAKS), and 1827–1837 (GGSSSNQKKAK).

It is found in the cytoplasm. The protein resides in the nucleus. Functions as a component of the nuclear pore complex (NPC). NPC components, collectively referred to as nucleoporins (NUPs), can play the role of both NPC structural components and of docking or interaction partners for transiently associated nuclear transport factors. Active directional transport is assured by both, a Phe-Gly (FG) repeat affinity gradient for these transport factors across the NPC and a transport cofactor concentration gradient across the nuclear envelope. This Schizosaccharomyces pombe (strain 972 / ATCC 24843) (Fission yeast) protein is Nucleoporin nup211 (nup211).